The sequence spans 973 residues: Mediator of RNA polymerase II transcription subunit 16 (973 aa).

Belongs to the Mediator complex subunit 16 family. As to quaternary structure, component of the Mediator complex.

It is found in the nucleus. Functionally, component of the Mediator complex, a coactivator involved in the regulated transcription of nearly all RNA polymerase II-dependent genes. Mediator functions as a bridge to convey information from gene-specific regulatory proteins to the basal RNA polymerase II transcription machinery. Mediator is recruited to promoters by direct interactions with regulatory proteins and serves as a scaffold for the assembly of a functional preinitiation complex with RNA polymerase II and the general transcription factors. The chain is Mediator of RNA polymerase II transcription subunit 16 (SIN4) from Candida glabrata (strain ATCC 2001 / BCRC 20586 / JCM 3761 / NBRC 0622 / NRRL Y-65 / CBS 138) (Yeast).